Reading from the N-terminus, the 235-residue chain is CD-NTase-associated protein 13 (235 aa).

The next 2 membrane-spanning stretches (helical) occupy residues 14-34 (IVHH…LIWI) and 45-65 (IIFT…IVGL).

It in the C-terminal section; belongs to the bacterial STING family. In terms of assembly, homodimer.

It is found in the cell inner membrane. Its function is as follows. Effector protein of a CBASS antivirus system. CBASS (cyclic oligonucleotide-based antiphage signaling system) provides immunity against bacteriophage. The CD-NTase protein synthesizes cyclic nucleotides in response to infection; these serve as specific second messenger signals. The signals activate a diverse range of effectors, leading to bacterial cell death and thus abortive phage infection. A type I-D(GG) CBASS system. Binds cyclic dinucleotides: binds c-di-GMP (synthesized by the cognate CdnE encoded upstream in the same operon), cyclic 3'3'-cyclic GMP-AMP (3'3'-cGAMP) but not cUMP-AMP. The effector protein for this CBASS system, its activity is stimulated by c-di-GMP and leads to cell death. This is CD-NTase-associated protein 13 from Flavobacteriaceae sp. genome_bin_11.